Reading from the N-terminus, the 277-residue chain is NADPH-dependent 7-cyano-7-deazaguanine reductase (277 aa).

Ile83–Ser85 serves as a coordination point for substrate. NADPH is bound at residue Ser85–Lys86. Residue Cys184 is the Thioimide intermediate of the active site. Asp191 serves as the catalytic Proton donor. His223 to Glu224 provides a ligand contact to substrate. An NADPH-binding site is contributed by Arg252–Gly253.

The protein belongs to the GTP cyclohydrolase I family. QueF type 2 subfamily. As to quaternary structure, homodimer.

It localises to the cytoplasm. It carries out the reaction 7-aminomethyl-7-carbaguanine + 2 NADP(+) = 7-cyano-7-deazaguanine + 2 NADPH + 3 H(+). It functions in the pathway tRNA modification; tRNA-queuosine biosynthesis. In terms of biological role, catalyzes the NADPH-dependent reduction of 7-cyano-7-deazaguanine (preQ0) to 7-aminomethyl-7-deazaguanine (preQ1). The chain is NADPH-dependent 7-cyano-7-deazaguanine reductase from Cupriavidus necator (strain ATCC 17699 / DSM 428 / KCTC 22496 / NCIMB 10442 / H16 / Stanier 337) (Ralstonia eutropha).